Here is a 65-residue protein sequence, read N- to C-terminus: Weak neurotoxin 7 (65 aa).

5 cysteine pairs are disulfide-bonded: C3-C24, C6-C11, C17-C42, C46-C57, and C58-C63.

The protein belongs to the three-finger toxin family. Ancestral subfamily. Orphan group II sub-subfamily. In terms of tissue distribution, expressed by the venom gland.

The protein localises to the secreted. Functionally, binds with low affinity to muscular (alpha-1-beta-1-delta-epsilon/CHRNA1-CHRNB1-CHRND-CHRNE) and very low affinity to neuronal (alpha-7/CHRNA7) nicotinic acetylcholine receptor (nAChR). This chain is Weak neurotoxin 7, found in Naja naja (Indian cobra).